Reading from the N-terminus, the 448-residue chain is Trigger factor (448 aa).

Residues 163-248 (GDIVVIDFDG…VKDIRVPKAA (86 aa)) enclose the PPIase FKBP-type domain.

Belongs to the FKBP-type PPIase family. Tig subfamily.

It is found in the cytoplasm. It catalyses the reaction [protein]-peptidylproline (omega=180) = [protein]-peptidylproline (omega=0). Involved in protein export. Acts as a chaperone by maintaining the newly synthesized protein in an open conformation. Functions as a peptidyl-prolyl cis-trans isomerase. In Rhodospirillum centenum (strain ATCC 51521 / SW), this protein is Trigger factor.